We begin with the raw amino-acid sequence, 447 residues long: Guanine nucleotide-binding protein alpha-1 subunit (447 aa).

Glycine 2 carries N-myristoyl glycine lipidation. Cysteine 3 is lipidated: S-palmitoyl cysteine. A G-alpha domain is found at 40-447 (NEVKLLLLGA…QQNLKKSGIL (408 aa)). Residues 43–56 (KLLLLGAGESGKST) are G1 motif. GTP-binding residues include glutamate 51, serine 52, glycine 53, lysine 54, serine 55, threonine 56, leucine 269, threonine 275, glycine 297, asparagine 363, lysine 364, aspartate 366, and alanine 419. Serine 55 contacts Mg(2+). Residues 267–275 (DILKGRIKT) form a G2 motif region. A Mg(2+)-binding site is contributed by threonine 275. Positions 290-299 (FKVYDAGGQR) are G3 motif. Positions 359-366 (ILFLNKVD) are G4 motif. The tract at residues 417 to 422 (TCATDT) is G5 motif.

This sequence belongs to the G-alpha family. As to quaternary structure, g proteins are composed of 3 units; alpha, beta and gamma. The alpha chain contains the guanine nucleotide binding site. Requires Mg(2+) as cofactor.

In terms of biological role, guanine nucleotide-binding proteins (G proteins) are involved as modulators or transducers in various transmembrane signaling systems. This protein is involved in the mating response pathway. This Kluyveromyces lactis (strain ATCC 8585 / CBS 2359 / DSM 70799 / NBRC 1267 / NRRL Y-1140 / WM37) (Yeast) protein is Guanine nucleotide-binding protein alpha-1 subunit (GPA1).